Here is a 305-residue protein sequence, read N- to C-terminus: Glutaminase (305 aa).

Substrate is bound by residues S61, N113, E158, N165, Y189, Y241, and V259.

The protein belongs to the glutaminase family. In terms of assembly, homotetramer.

It carries out the reaction L-glutamine + H2O = L-glutamate + NH4(+). The chain is Glutaminase from Clostridium botulinum (strain ATCC 19397 / Type A).